The sequence spans 466 residues: 3-isopropylmalate dehydratase large subunit (466 aa).

C349, C410, and C413 together coordinate [4Fe-4S] cluster.

The protein belongs to the aconitase/IPM isomerase family. LeuC type 1 subfamily. As to quaternary structure, heterodimer of LeuC and LeuD. [4Fe-4S] cluster serves as cofactor.

It carries out the reaction (2R,3S)-3-isopropylmalate = (2S)-2-isopropylmalate. It participates in amino-acid biosynthesis; L-leucine biosynthesis; L-leucine from 3-methyl-2-oxobutanoate: step 2/4. Its function is as follows. Catalyzes the isomerization between 2-isopropylmalate and 3-isopropylmalate, via the formation of 2-isopropylmaleate. The chain is 3-isopropylmalate dehydratase large subunit from Vesicomyosocius okutanii subsp. Calyptogena okutanii (strain HA).